The chain runs to 338 residues: tRNA N6-adenosine threonylcarbamoyltransferase (338 aa).

Fe cation contacts are provided by histidine 114 and histidine 118. Substrate-binding positions include 137 to 141 (IVSGG), aspartate 170, glycine 183, aspartate 187, and asparagine 277. Residue aspartate 305 coordinates Fe cation.

This sequence belongs to the KAE1 / TsaD family. Fe(2+) serves as cofactor.

It localises to the cytoplasm. It carries out the reaction L-threonylcarbamoyladenylate + adenosine(37) in tRNA = N(6)-L-threonylcarbamoyladenosine(37) in tRNA + AMP + H(+). Its function is as follows. Required for the formation of a threonylcarbamoyl group on adenosine at position 37 (t(6)A37) in tRNAs that read codons beginning with adenine. Is involved in the transfer of the threonylcarbamoyl moiety of threonylcarbamoyl-AMP (TC-AMP) to the N6 group of A37, together with TsaE and TsaB. TsaD likely plays a direct catalytic role in this reaction. In Clostridioides difficile (strain 630) (Peptoclostridium difficile), this protein is tRNA N6-adenosine threonylcarbamoyltransferase.